The following is a 374-amino-acid chain: Alanine racemase (374 aa).

Residue Lys-35 is the Proton acceptor; specific for D-alanine of the active site. Lys-35 is subject to N6-(pyridoxal phosphate)lysine. Residue Arg-133 coordinates substrate. Residue Tyr-264 is the Proton acceptor; specific for L-alanine of the active site. Met-312 lines the substrate pocket.

Belongs to the alanine racemase family. Requires pyridoxal 5'-phosphate as cofactor.

It carries out the reaction L-alanine = D-alanine. Its pathway is amino-acid biosynthesis; D-alanine biosynthesis; D-alanine from L-alanine: step 1/1. Functionally, catalyzes the interconversion of L-alanine and D-alanine. May also act on other amino acids. This chain is Alanine racemase (alr), found in Thermobifida fusca (strain YX).